The chain runs to 200 residues: Holliday junction branch migration complex subunit RuvA (200 aa).

The interval 1 to 64 (MIGHLRGIIV…EDAHTLYGFH (64 aa)) is domain I. Residues 65–143 (NDHERRLFRA…RWHTNDTPSP (79 aa)) form a domain II region. A disordered region spans residues 133–152 (SRWHTNDTPSPEGLRSSNTQ). Residues 144-148 (EGLRS) form a flexible linker region. The interval 149 to 200 (SNTQPTQDAISALMALGYKPQEAKRAIDAIQKPDLSAETLIRLALKQMVLGT) is domain III.

Belongs to the RuvA family. As to quaternary structure, homotetramer. Forms an RuvA(8)-RuvB(12)-Holliday junction (HJ) complex. HJ DNA is sandwiched between 2 RuvA tetramers; dsDNA enters through RuvA and exits via RuvB. An RuvB hexamer assembles on each DNA strand where it exits the tetramer. Each RuvB hexamer is contacted by two RuvA subunits (via domain III) on 2 adjacent RuvB subunits; this complex drives branch migration. In the full resolvosome a probable DNA-RuvA(4)-RuvB(12)-RuvC(2) complex forms which resolves the HJ.

Its subcellular location is the cytoplasm. Functionally, the RuvA-RuvB-RuvC complex processes Holliday junction (HJ) DNA during genetic recombination and DNA repair, while the RuvA-RuvB complex plays an important role in the rescue of blocked DNA replication forks via replication fork reversal (RFR). RuvA specifically binds to HJ cruciform DNA, conferring on it an open structure. The RuvB hexamer acts as an ATP-dependent pump, pulling dsDNA into and through the RuvAB complex. HJ branch migration allows RuvC to scan DNA until it finds its consensus sequence, where it cleaves and resolves the cruciform DNA. The sequence is that of Holliday junction branch migration complex subunit RuvA from Coxiella burnetii (strain Dugway 5J108-111).